The chain runs to 257 residues: S-methyl-5'-thioadenosine phosphorylase (257 aa).

Phosphate contacts are provided by residues S10, 50-51 (RH), and 83-84 (TA). M180 contributes to the substrate binding site. T181 lines the phosphate pocket. 204-206 (DYD) lines the substrate pocket.

Belongs to the PNP/MTAP phosphorylase family. MTAP subfamily. As to quaternary structure, homohexamer. Dimer of a homotrimer.

The enzyme catalyses S-methyl-5'-thioadenosine + phosphate = 5-(methylsulfanyl)-alpha-D-ribose 1-phosphate + adenine. It carries out the reaction adenosine + phosphate = alpha-D-ribose 1-phosphate + adenine. It functions in the pathway amino-acid biosynthesis; L-methionine biosynthesis via salvage pathway; S-methyl-5-thio-alpha-D-ribose 1-phosphate from S-methyl-5'-thioadenosine (phosphorylase route): step 1/1. Its function is as follows. Catalyzes the reversible phosphorylation of S-methyl-5'-thioadenosine (MTA) to adenine and 5-methylthioribose-1-phosphate. Involved in the breakdown of MTA, a major by-product of polyamine biosynthesis. Responsible for the first step in the methionine salvage pathway after MTA has been generated from S-adenosylmethionine. Has broad substrate specificity with 6-aminopurine nucleosides as preferred substrates. Can also use adenosine as substrate to form ribose 1-phosphate. In Thermococcus kodakarensis (strain ATCC BAA-918 / JCM 12380 / KOD1) (Pyrococcus kodakaraensis (strain KOD1)), this protein is S-methyl-5'-thioadenosine phosphorylase.